We begin with the raw amino-acid sequence, 515 residues long: Dimethylnonatriene synthase (515 aa).

A helical transmembrane segment spans residues 3 to 23 (FLFSTLQLSLFSLALVIFGYI). Histidine 219 lines the substrate pocket. Lysine 252 is covalently cross-linked (Glycyl lysine isopeptide (Lys-Gly) (interchain with G-Cter in ubiquitin)). Cysteine 452 serves as a coordination point for heme.

It belongs to the cytochrome P450 family. Heme is required as a cofactor. In terms of tissue distribution, expressed in stems, flower peduncles, receptacle of developing and mature flowers and in stigma of mature opening flower buds.

The protein resides in the membrane. The catalysed reaction is (3S,6E)-nerolidol + reduced [NADPH--hemoprotein reductase] + O2 = (3E)-4,8-dimethylnona-1,3,7-triene + but-3-en-2-one + oxidized [NADPH--hemoprotein reductase] + 2 H2O + H(+). It catalyses the reaction (6E,10E)-geranyllinalool + reduced [NADPH--hemoprotein reductase] + O2 = (3E,7E)-4,8,12-trimethyltrideca 1,3,7,11-tetraene + but-3-en-2-one + oxidized [NADPH--hemoprotein reductase] + 2 H2O + H(+). It participates in secondary metabolite biosynthesis; terpenoid biosynthesis. In terms of biological role, involved in the biosynthesis of homoterpenes, attractants of herbivores parasitoids and predators (e.g. predatory mites and parasitoid wasps). Catalyzes the conversion of the C20 (E,E)-geranyllinalool to C16-homoterpene 4,8,12-trimethyltrideca-1,3,7,11-tetraene (TMTT) of the C15 (E)-nerolidol to C11-homoterpene (E)-4,8-dimethyl-1,3,7-nonatriene (DMNT); these volatile compounds are produced upon insect herbivore attack and emitted from flowers and vegetative tissues during herbivore feeding. Required during resistance responses to the fungus Alternaria brassicae. Prevents oviposition of the phloem-feeding insect cabbage whitefly (Aleyrodes proletella). This is Dimethylnonatriene synthase from Arabidopsis thaliana (Mouse-ear cress).